Consider the following 330-residue polypeptide: DNA-directed RNA polymerase subunit alpha (330 aa).

The interval 1–236 (MQNSVIEFLK…EQLEAFIDLR (236 aa)) is alpha N-terminal domain (alpha-NTD). The segment at 250–330 (FDPILLRLVD…NWPPTNILDN (81 aa)) is alpha C-terminal domain (alpha-CTD).

The protein belongs to the RNA polymerase alpha chain family. Homodimer. The RNAP catalytic core consists of 2 alpha, 1 beta, 1 beta' and 1 omega subunit. When a sigma factor is associated with the core the holoenzyme is formed, which can initiate transcription.

The catalysed reaction is RNA(n) + a ribonucleoside 5'-triphosphate = RNA(n+1) + diphosphate. Its function is as follows. DNA-dependent RNA polymerase catalyzes the transcription of DNA into RNA using the four ribonucleoside triphosphates as substrates. In Blochmanniella pennsylvanica (strain BPEN), this protein is DNA-directed RNA polymerase subunit alpha.